The following is a 262-amino-acid chain: Tryptophan synthase alpha chain (262 aa).

Catalysis depends on proton acceptor residues glutamate 51 and aspartate 62.

Belongs to the TrpA family. As to quaternary structure, tetramer of two alpha and two beta chains.

The catalysed reaction is (1S,2R)-1-C-(indol-3-yl)glycerol 3-phosphate + L-serine = D-glyceraldehyde 3-phosphate + L-tryptophan + H2O. It participates in amino-acid biosynthesis; L-tryptophan biosynthesis; L-tryptophan from chorismate: step 5/5. In terms of biological role, the alpha subunit is responsible for the aldol cleavage of indoleglycerol phosphate to indole and glyceraldehyde 3-phosphate. This is Tryptophan synthase alpha chain from Oceanobacillus iheyensis (strain DSM 14371 / CIP 107618 / JCM 11309 / KCTC 3954 / HTE831).